A 730-amino-acid polypeptide reads, in one-letter code: Sodium-dependent neutral amino acid transporter B(0)AT2 (730 aa).

Positions 1–24 (MPKNSKVVKRELDDDVTESVKDLL) are disordered. Topologically, residues 1–70 (MPKNSKVVKR…RPAWSSKLQY (70 aa)) are extracellular. 2 positions are modified to phosphoserine: Ser25 and Ser55. 3 helical membrane passes run 71-91 (ILAQVGFSVGLGNVWRFPYLC), 97-117 (GAYLLPYLILLMVIGIPLFFL), and 149-169 (VVCYFVALYYNVIIGWSLFYF). Residues 170-223 (SQSFQQPLPWDQCPLVKNASHTFVEPECEQSSATTYYWYREALNISSSISESGG) are Cytoplasmic-facing. Transmembrane regions (helical) follow at residues 224–244 (LNWKMTICLLAAWVMVCLAMI) and 253–273 (IIYFSSLFPYVVLICFLIRAL). Asn276 carries N-linked (GlcNAc...) asparagine glycosylation. Helical transmembrane passes span 302–322 (AATQVFFALGLGFGGVIAFSS) and 335–355 (VLVSFINFFTSVLATLVVFAV). Over 356–458 (LGFKANVINE…AMTHFPASPF (103 aa)) the chain is Cytoplasmic. The next 5 helical transmembrane spans lie at 459 to 479 (WSVMFFLMLVNLGLGSMFGTI), 494 to 514 (KEILTVICCLLAFCIGLIFVQ), 530 to 550 (TLPLLIVVILENIAVCFVYGI), 575 to 595 (YVSPLMLLSLLIASVVNMGLS), and 619 to 639 (LVVCVSLVVFAVLPVPVVFIV). Residues 640-730 (RRFNLIDDSS…IMPDMPESDL (91 aa)) lie on the Extracellular side of the membrane. Phosphoserine occurs at positions 687, 699, and 701.

The protein belongs to the sodium:neurotransmitter symporter (SNF) (TC 2.A.22) family. SLC6A15 subfamily.

It localises to the membrane. The enzyme catalyses L-leucine(in) + Na(+)(in) = L-leucine(out) + Na(+)(out). It catalyses the reaction L-isoleucine(in) + Na(+)(in) = L-isoleucine(out) + Na(+)(out). It carries out the reaction L-methionine(in) + Na(+)(in) = L-methionine(out) + Na(+)(out). The catalysed reaction is L-proline(in) + Na(+)(in) = L-proline(out) + Na(+)(out). The enzyme catalyses L-alanine(in) + Na(+)(in) = L-alanine(out) + Na(+)(out). It catalyses the reaction L-asparagine(in) + Na(+)(in) = L-asparagine(out) + Na(+)(out). It carries out the reaction L-valine(in) + Na(+)(in) = L-valine(out) + Na(+)(out). The catalysed reaction is L-cysteine(in) + Na(+)(in) = L-cysteine(out) + Na(+)(out). The enzyme catalyses L-glutamine(in) + Na(+)(in) = L-glutamine(out) + Na(+)(out). It catalyses the reaction L-serine(in) + Na(+)(in) = L-serine(out) + Na(+)(out). It carries out the reaction L-threonine(in) + Na(+)(in) = L-threonine(out) + Na(+)(out). The catalysed reaction is L-pipecolate(in) + Na(+)(in) = L-pipecolate(out) + Na(+)(out). The enzyme catalyses L-phenylalanine(in) + Na(+)(in) = L-phenylalanine(out) + Na(+)(out). Its function is as follows. Functions as a sodium-dependent neutral amino acid transporter. Exhibits preference for the branched-chain amino acids, particularly leucine, valine and isoleucine and methionine. Can also transport low-affinity substrates such as alanine, phenylalanine, glutamine and pipecolic acid. Mediates the saturable, pH-sensitive and electrogenic cotransport of proline and sodium ions with a stoichiometry of 1:1. May have a role as transporter for neurotransmitter precursors into neurons. In contrast to other members of the neurotransmitter transporter family, does not appear to be chloride-dependent. The polypeptide is Sodium-dependent neutral amino acid transporter B(0)AT2 (SLC6A15) (Pongo abelii (Sumatran orangutan)).